The sequence spans 188 residues: RWD domain-containing protein 4 (188 aa).

Positions 9–111 (MELEALRSIY…EYAKDHKEQF (103 aa)) constitute an RWD domain. Residues 132–167 (TPTTAPSSKKKEKKEQLSKAQKRKLADKTDHKGELP) are disordered. A compositionally biased stretch (basic and acidic residues) spans 155–166 (KLADKTDHKGEL).

The sequence is that of RWD domain-containing protein 4 (Rwdd4) from Mus musculus (Mouse).